Consider the following 61-residue polypeptide: Small ribosomal subunit protein uS14B (61 aa).

Zn(2+) is bound by residues cysteine 24, cysteine 27, cysteine 40, and cysteine 43.

It belongs to the universal ribosomal protein uS14 family. Zinc-binding uS14 subfamily. Part of the 30S ribosomal subunit. Contacts proteins S3 and S10. Zn(2+) is required as a cofactor.

Binds 16S rRNA, required for the assembly of 30S particles and may also be responsible for determining the conformation of the 16S rRNA at the A site. The polypeptide is Small ribosomal subunit protein uS14B (Nocardia farcinica (strain IFM 10152)).